The primary structure comprises 579 residues: Cyclin-T1-5 (579 aa).

Disordered stretches follow at residues 1–27 (MAGV…HEKQ) and 271–419 (RVPA…GDAL). Positions 11–20 (YSESGVSSHS) are enriched in polar residues. Over residues 274 to 283 (ASQGSEVESS) the composition is skewed to low complexity. Residues 306–334 (SRQTSSVRSTHEQSNSDNHGGSSKGVLNQ) show a composition bias toward polar residues. Basic and acidic residues-rich tracts occupy residues 349-380 (DNKE…EAPH) and 389-414 (PGKD…RNVD). Residue S423 is modified to Phosphoserine. Composition is skewed to basic and acidic residues over residues 474–512 (DEKT…KNTE), 538–556 (KQSE…ESHK), and 563–579 (HHGD…NNHS). A disordered region spans residues 474-579 (DEKTKERKVQ…RRHSQENNHS (106 aa)).

Belongs to the cyclin family. Cyclin T subfamily.

The chain is Cyclin-T1-5 (CYCT1-5) from Arabidopsis thaliana (Mouse-ear cress).